Consider the following 274-residue polypeptide: uncharacterized protein (274 aa).

Residues 3-141 (IFIPKARRPT…TIRIGISLKQ (139 aa)) enclose the C2 NT-type domain.

The protein to yeast YBL086c.

This is an uncharacterized protein from Schizosaccharomyces pombe (strain 972 / ATCC 24843) (Fission yeast).